Reading from the N-terminus, the 163-residue chain is SKP1-like protein 4 (163 aa).

Positions 105-163 are interaction with the F-box domain of F-box proteins; that stretch reads ILAANYLNIGGLLDLTCKAVADQMRGKTPEQMRAHFNIKNDYTPEEEAEVRNENKWAFE.

Belongs to the SKP1 family. As to quaternary structure, part of a SCF (SKP1-cullin-F-box) protein ligase complex. Interacts with At1g56610, At1g67340, At3g62230, At3g59000, At4g27050, At1g55000, SKIP16 and SKIP32. In terms of tissue distribution, mostly expressed in inflorescence and siliques, and, to a lower extent, in seedlings, roots, and stems.

Its subcellular location is the nucleus. The protein operates within protein modification; protein ubiquitination. Involved in ubiquitination and subsequent proteasomal degradation of target proteins. Together with CUL1, RBX1 and a F-box protein, it forms a SCF E3 ubiquitin ligase complex. The functional specificity of this complex depends on the type of F-box protein. In the SCF complex, it serves as an adapter that links the F-box protein to CUL1. The sequence is that of SKP1-like protein 4 (ASK4) from Arabidopsis thaliana (Mouse-ear cress).